The primary structure comprises 168 residues: Transcription antitermination protein NusB (168 aa).

Residues 147–168 are disordered; sequence RGLINNSSRNTSRSEEKHSTEK. Basic and acidic residues predominate over residues 158–168; sequence SRSEEKHSTEK.

Belongs to the NusB family.

Its function is as follows. Involved in transcription antitermination. Required for transcription of ribosomal RNA (rRNA) genes. Binds specifically to the boxA antiterminator sequence of the ribosomal RNA (rrn) operons. The chain is Transcription antitermination protein NusB from Chlorobium phaeobacteroides (strain BS1).